A 372-amino-acid chain; its full sequence is Spermidine/putrescine import ATP-binding protein PotA (372 aa).

The region spanning 11-241 (IELRSIKKSY…PANLFVARFI (231 aa)) is the ABC transporter domain. 43 to 50 (GPSGCGKT) is a binding site for ATP.

The protein belongs to the ABC transporter superfamily. Spermidine/putrescine importer (TC 3.A.1.11.1) family. In terms of assembly, the complex is composed of two ATP-binding proteins (PotA), two transmembrane proteins (PotB and PotC) and a solute-binding protein (PotD).

Its subcellular location is the cell inner membrane. It catalyses the reaction ATP + H2O + polyamine-[polyamine-binding protein]Side 1 = ADP + phosphate + polyamineSide 2 + [polyamine-binding protein]Side 1.. Functionally, part of the ABC transporter complex PotABCD involved in spermidine/putrescine import. Responsible for energy coupling to the transport system. The polypeptide is Spermidine/putrescine import ATP-binding protein PotA (Haemophilus influenzae (strain ATCC 51907 / DSM 11121 / KW20 / Rd)).